The primary structure comprises 295 residues: Small ribosomal subunit protein uS2B (295 aa).

At serine 2 the chain carries N-acetylserine. An interaction with PPP1R16B region spans residues 54 to 113; that stretch reads TWEKLLLAARAIVAIENPADVSVISSRNTGQRAVLKFAAATGATPIAGRFTPGTFTNQIQ. Laminin-binding regions lie at residues 161-180 and 205-229; these read IPCNNKGAHSVGLMWWMLAR and RDPEEIEKEEQAAAEKAVTKEEFQG. Basic and acidic residues predominate over residues 218–227; sequence AEKAVTKEEF. Positions 218–242 are disordered; that stretch reads AEKAVTKEEFQGEWTAPSPEFTATQ. [DE]-W-[ST] repeat units follow at residues 230-232, 247-249, 266-268, 275-277, and 293-295; these read EWT and DWS. Positions 242 to 295 are laminin-binding; sequence QPEVADWSEGVQVPSVPIQQFPTEDWSAQPATEDWSAAPTAQATEWVGATTDWS. The interval 266 to 295 is disordered; sequence DWSAQPATEDWSAAPTAQATEWVGATTDWS.

Belongs to the universal ribosomal protein uS2 family. Monomer (37LRP) and homodimer (67LR). Component of the small ribosomal subunit. Mature ribosomes consist of a small (40S) and a large (60S) subunit. The 40S subunit contains about 33 different proteins and 1 molecule of RNA (18S). The 60S subunit contains about 49 different proteins and 3 molecules of RNA (28S, 5.8S and 5S). Interacts with RPS21. Interacts with several laminins including at least LAMB1. Interacts with MDK. The mature dimeric form interacts with PPP1R16B (via its fourth ankyrin repeat). Interacts with PPP1CA only in the presence of PPP1R16B. Acylated. Acylation may be a prerequisite for conversion of the monomeric 37 kDa laminin receptor precursor (37LRP) to the mature dimeric 67 kDa laminin receptor (67LR), and may provide a mechanism for membrane association. In terms of processing, cleaved by stromelysin-3 (ST3) at the cell surface. Cleavage by stromelysin-3 may be a mechanism to alter cell-extracellular matrix interactions.

Its subcellular location is the cell membrane. The protein resides in the cytoplasm. It is found in the nucleus. Its function is as follows. Required for the assembly and/or stability of the 40S ribosomal subunit. Required for the processing of the 20S rRNA-precursor to mature 18S rRNA in a late step of the maturation of 40S ribosomal subunits. Also functions as a cell surface receptor for laminin. Plays a role in cell adhesion to the basement membrane and in the consequent activation of signaling transduction pathways. May play a role in cell fate determination and tissue morphogenesis. Also acts as a receptor for several other ligands, including the pathogenic prion protein, viruses, and bacteria. Acts as a PPP1R16B-dependent substrate of PPP1CA. This Homo sapiens (Human) protein is Small ribosomal subunit protein uS2B.